A 104-amino-acid chain; its full sequence is Intracellular chorismate mutase (104 aa).

Residues 23–104 (AVPEIDDLRR…LRLGRGRLGY (82 aa)) form the Chorismate mutase domain. The chorismate site is built by Arg-59, Val-68, and Glu-72.

As to quaternary structure, homodimer. Probably interacts with AroG (MSMEG_4244).

It localises to the cytoplasm. It carries out the reaction chorismate = prephenate. It participates in metabolic intermediate biosynthesis; prephenate biosynthesis; prephenate from chorismate: step 1/1. With respect to regulation, the formation of the complex with AroG activates the chorismate mutase activity. Its function is as follows. Catalyzes the Claisen rearrangement of chorismate to prephenate. Probably involved in the aromatic amino acid biosynthesis. This chain is Intracellular chorismate mutase, found in Mycolicibacterium smegmatis (strain ATCC 700084 / mc(2)155) (Mycobacterium smegmatis).